The following is a 624-amino-acid chain: Aliphatic sulfonate oxidoreductase, WOR-like subunit (624 aa).

Tungstopterin-binding residues include Lys-77, Ser-93, Val-94, Ser-96, His-195, Ala-196, Gly-198, and Tyr-199. [4Fe-4S] cluster contacts are provided by Asp-299, Cys-302, and Cys-306. Tungstopterin-binding residues include Asp-353, Leu-357, Asp-358, Gly-359, Thr-470, Asp-490, Ile-494, Cys-495, and Asn-496. Cys-495 is a [4Fe-4S] cluster binding site. The tract at residues 552 to 575 (KDDDNPPRFYEPLPSGPVKGKAPN) is disordered.

Belongs to the AOR/FOR family. As to quaternary structure, heterodimer composed of a small WOR5-S subunit, with four [4Fe-4S] clusters, and a large WOR5-L subunit, containing the active site tungsto-bispyranopterin cofactor as well as another [4Fe-4S] cluster. Requires [4Fe-4S] cluster as cofactor. It depends on tungstopterin as a cofactor.

It is found in the cytoplasm. The catalysed reaction is an aliphatic sulfonate + 4 oxidized [4Fe-4S]-[ferredoxin] + 2 H2O = 4 reduced [4Fe-4S]-[ferredoxin] + a carboxylate + sulfite + 6 H(+). It carries out the reaction an aliphatic sulfonate + 2 oxidized [4Fe-4S]-[ferredoxin] + H2O = 2 reduced [4Fe-4S]-[ferredoxin] + an aldehyde + sulfite + 3 H(+). It catalyses the reaction 2 oxidized [4Fe-4S]-[ferredoxin] + an aldehyde + H2O = 2 reduced [4Fe-4S]-[ferredoxin] + a carboxylate + 3 H(+). The enzyme catalyses 4 oxidized [4Fe-4S]-[ferredoxin] + taurine + 2 H2O = 4 reduced [4Fe-4S]-[ferredoxin] + sulfite + glycine + 6 H(+). The catalysed reaction is 2 oxidized [4Fe-4S]-[ferredoxin] + taurine + H2O = aminoacetaldehyde + 2 reduced [4Fe-4S]-[ferredoxin] + sulfite + 3 H(+). It carries out the reaction aminoacetaldehyde + 2 oxidized [4Fe-4S]-[ferredoxin] + H2O = 2 reduced [4Fe-4S]-[ferredoxin] + glycine + 3 H(+). Its function is as follows. WOR-like catalytic subunit of an oxidoreductase that can desulfonate and oxidize aliphatic sulfonates such as taurine. The activity involves two steps: an oxidative desulfonation reaction, followed by the activation of a second water molecule and oxidation of the resulting aldehyde. May be involved in the oxidation of various aliphatic sulfonates and also phosphonates. In vitro, has a broad substrate specificity with a high affinity for several substituted and nonsubstituted aliphatic and aromatic aldehydes with various chain lengths, with methyl viologen or benzyl viologen as electron acceptor. Ferredoxin is the physiological electron acceptor. This is Aliphatic sulfonate oxidoreductase, WOR-like subunit from Pyrococcus furiosus (strain ATCC 43587 / DSM 3638 / JCM 8422 / Vc1).